A 529-amino-acid polypeptide reads, in one-letter code: Bifunctional purine biosynthesis protein PurH (529 aa).

Residues 1 to 148 (MQQRRPVRRA…KNHKDVAIVV (148 aa)) enclose the MGS-like domain. Lysine 287 bears the N6-acetyllysine mark.

This sequence belongs to the PurH family.

It carries out the reaction (6R)-10-formyltetrahydrofolate + 5-amino-1-(5-phospho-beta-D-ribosyl)imidazole-4-carboxamide = 5-formamido-1-(5-phospho-D-ribosyl)imidazole-4-carboxamide + (6S)-5,6,7,8-tetrahydrofolate. The catalysed reaction is IMP + H2O = 5-formamido-1-(5-phospho-D-ribosyl)imidazole-4-carboxamide. The protein operates within purine metabolism; IMP biosynthesis via de novo pathway; 5-formamido-1-(5-phospho-D-ribosyl)imidazole-4-carboxamide from 5-amino-1-(5-phospho-D-ribosyl)imidazole-4-carboxamide (10-formyl THF route): step 1/1. Its pathway is purine metabolism; IMP biosynthesis via de novo pathway; IMP from 5-formamido-1-(5-phospho-D-ribosyl)imidazole-4-carboxamide: step 1/1. The chain is Bifunctional purine biosynthesis protein PurH from Escherichia coli O6:H1 (strain CFT073 / ATCC 700928 / UPEC).